The primary structure comprises 363 residues: UV excision repair protein RAD23 homolog A (363 aa).

The Ubiquitin-like domain occupies 1–81 (MAVTITLKTL…VVVMVTKTKA (81 aa)). The tract at residues 81-160 (AGQGTSAPPE…EDAASTLVTG (80 aa)) is disordered. A compositionally biased stretch (low complexity) spans 85–103 (TSAPPEASPTAAPESSTSF). Lys122 is covalently cross-linked (Glycyl lysine isopeptide (Lys-Gly) (interchain with G-Cter in ubiquitin)). 5 positions are modified to phosphoserine: Ser123, Ser128, Ser133, Ser136, and Ser138. Residues 126–147 (EESAPTTSPESVSGSVPSSGSS) are compositionally biased toward low complexity. Positions 161–201 (SEYETMLTEIMSMGYERERVVAALRASYNNPHRAVEYLLTG) constitute a UBA 1 domain. The disordered stretch occupies residues 203–227 (PGSPEPEHGSVQESQVSEQPATEAA). Position 205 is a phosphoserine (Ser205). A compositionally biased stretch (polar residues) spans 213–222 (VQESQVSEQP). Ser295 and Ser357 each carry phosphoserine. Residues 318–358 (PQEKEAIERLKALGFPESLVIQAYFACEKNENLAANFLLSQ) enclose the UBA 2 domain. Residues 319 to 363 (QEKEAIERLKALGFPESLVIQAYFACEKNENLAANFLLSQNFDDE) form an HIV-1 vpr binding region.

Belongs to the RAD23 family. As to quaternary structure, interacts with XPC; the interaction is suggesting the existence of a functional equivalent variant XPC complex. Interacts with PSMD4 and PSMC5. Interacts with ATXN3. Interacts with UBQLN2. In terms of assembly, (Microbial infection) Interacts with HIV-1 Vpr.

It localises to the nucleus. In terms of biological role, multiubiquitin chain receptor involved in modulation of proteasomal degradation. Binds to 'Lys-48'-linked polyubiquitin chains in a length-dependent manner and with a lower affinity to 'Lys-63'-linked polyubiquitin chains. Proposed to be capable to bind simultaneously to the 26S proteasome and to polyubiquitinated substrates and to deliver ubiquitinated proteins to the proteasome. Involved in nucleotide excision repair and is thought to be functional equivalent for RAD23B in global genome nucleotide excision repair (GG-NER) by association with XPC. In vitro, the XPC:RAD23A dimer has NER activity. Can stabilize XPC. Functionally, (Microbial infection) Involved in Vpr-dependent replication of HIV-1 in non-proliferating cells and primary macrophages. Required for the association of HIV-1 Vpr with the host proteasome. The sequence is that of UV excision repair protein RAD23 homolog A (RAD23A) from Homo sapiens (Human).